Reading from the N-terminus, the 335-residue chain is Large ribosomal subunit protein uL10 (335 aa).

Positions 300–335 (QVSEQAAEKKEEKKEEEKKGPSEEEIGGGLSSLFGG) are disordered. Basic and acidic residues predominate over residues 305–321 (AAEKKEEKKEEEKKGPS). Positions 326 to 335 (GGGLSSLFGG) are enriched in gly residues.

It belongs to the universal ribosomal protein uL10 family. In terms of assembly, part of the 50S ribosomal subunit. Forms part of the ribosomal stalk which helps the ribosome interact with GTP-bound translation factors. Forms a heptameric L10(L12)2(L12)2(L12)2 complex, where L10 forms an elongated spine to which the L12 dimers bind in a sequential fashion.

In terms of biological role, forms part of the ribosomal stalk, playing a central role in the interaction of the ribosome with GTP-bound translation factors. The polypeptide is Large ribosomal subunit protein uL10 (Sulfolobus acidocaldarius (strain ATCC 33909 / DSM 639 / JCM 8929 / NBRC 15157 / NCIMB 11770)).